The chain runs to 283 residues: 4-diphosphocytidyl-2-C-methyl-D-erythritol kinase (283 aa).

Lys-10 is an active-site residue. An ATP-binding site is contributed by 99-109; sequence PMGGGLGGGSS. Asp-141 is a catalytic residue.

Belongs to the GHMP kinase family. IspE subfamily. In terms of assembly, homodimer.

The enzyme catalyses 4-CDP-2-C-methyl-D-erythritol + ATP = 4-CDP-2-C-methyl-D-erythritol 2-phosphate + ADP + H(+). It participates in isoprenoid biosynthesis; isopentenyl diphosphate biosynthesis via DXP pathway; isopentenyl diphosphate from 1-deoxy-D-xylulose 5-phosphate: step 3/6. Catalyzes the phosphorylation of the position 2 hydroxy group of 4-diphosphocytidyl-2C-methyl-D-erythritol. The chain is 4-diphosphocytidyl-2-C-methyl-D-erythritol kinase from Salmonella paratyphi C (strain RKS4594).